A 468-amino-acid chain; its full sequence is 3-isopropylmalate dehydratase large subunit (468 aa).

[4Fe-4S] cluster contacts are provided by Cys349, Cys409, and Cys412.

The protein belongs to the aconitase/IPM isomerase family. LeuC type 1 subfamily. Heterodimer of LeuC and LeuD. The cofactor is [4Fe-4S] cluster.

The enzyme catalyses (2R,3S)-3-isopropylmalate = (2S)-2-isopropylmalate. It functions in the pathway amino-acid biosynthesis; L-leucine biosynthesis; L-leucine from 3-methyl-2-oxobutanoate: step 2/4. Functionally, catalyzes the isomerization between 2-isopropylmalate and 3-isopropylmalate, via the formation of 2-isopropylmaleate. The chain is 3-isopropylmalate dehydratase large subunit from Roseobacter denitrificans (strain ATCC 33942 / OCh 114) (Erythrobacter sp. (strain OCh 114)).